The chain runs to 1465 residues: DNA polymerase III PolC-type (1465 aa).

In terms of domain architecture, Exonuclease spans 425–581 (YVVFDVETTG…YDAEATGRLL (157 aa)).

The protein belongs to the DNA polymerase type-C family. PolC subfamily.

The protein resides in the cytoplasm. The enzyme catalyses DNA(n) + a 2'-deoxyribonucleoside 5'-triphosphate = DNA(n+1) + diphosphate. Required for replicative DNA synthesis. This DNA polymerase also exhibits 3' to 5' exonuclease activity. This chain is DNA polymerase III PolC-type, found in Streptococcus mutans serotype c (strain ATCC 700610 / UA159).